The primary structure comprises 316 residues: C1GALT1-specific chaperone 1 (316 aa).

Residues 1–6 (MLSESS) lie on the Cytoplasmic side of the membrane. A helical; Signal-anchor for type II membrane protein transmembrane segment spans residues 7 to 26 (SFLKGVMLGSIFCALITMLG). Residues 27 to 316 (HIRIGNRMHH…FLPPNGSEND (290 aa)) lie on the Lumenal side of the membrane.

This sequence belongs to the glycosyltransferase 31 family. Beta3-Gal-T subfamily. In terms of assembly, associates with core 1 beta-3-galactosyltransferase (C1GALT1), probably not with the soluble active form.

Its subcellular location is the membrane. Its function is as follows. Probable chaperone required for the generation of 1 O-glycan Gal-beta1-3GalNAc-alpha1-Ser/Thr (T antigen), which is a precursor for many extended O-glycans in glycoproteins. Probably acts as a specific molecular chaperone assisting the folding/stability of core 1 beta-3-galactosyltransferase (C1GALT1). This is C1GALT1-specific chaperone 1 (C1galt1c1) from Rattus norvegicus (Rat).